The sequence spans 452 residues: PTS system N-acetylglucosamine-specific EIICB component (452 aa).

The 361-residue stretch at Met-1–Asp-361 folds into the PTS EIIC type-1 domain. 9 consecutive transmembrane segments (helical) span residues Leu-8–Leu-28, Ala-42–Ile-62, Thr-91–Asn-111, Leu-130–Trp-150, Trp-163–Ile-183, Met-223–Val-243, Met-257–Phe-277, Phe-279–Val-299, and Leu-329–Ile-349. In terms of domain architecture, PTS EIIB type-1 spans Asp-375–Lys-452. Residue Cys-397 is the Phosphocysteine intermediate; for EIIB activity of the active site.

In terms of assembly, interacts with FloT.

The protein resides in the cell membrane. It localises to the membrane raft. It catalyses the reaction N(pros)-phospho-L-histidyl-[protein] + N-acetyl-D-glucosamine(out) = N-acetyl-D-glucosamine 6-phosphate(in) + L-histidyl-[protein]. Functionally, the phosphoenolpyruvate-dependent sugar phosphotransferase system (sugar PTS), a major carbohydrate active -transport system, catalyzes the phosphorylation of incoming sugar substrates concomitantly with their translocation across the cell membrane. This system is involved in N-acetylglucosamine transport. This chain is PTS system N-acetylglucosamine-specific EIICB component (nagP), found in Bacillus subtilis (strain 168).